A 439-amino-acid polypeptide reads, in one-letter code: Cobyrinate a,c-diamide synthase (439 aa).

The tract at residues 214-235 is disordered; the sequence is ETARAPPEVATTERNTGDSPAD. The GATase cobBQ-type domain occupies 237-428; it reads RVAVAQDSAF…CHCHGESGAF (192 aa). Catalysis depends on Cys317, which acts as the Nucleophile.

The protein belongs to the CobB/CbiA family. It depends on Mg(2+) as a cofactor.

It carries out the reaction cob(II)yrinate + 2 L-glutamine + 2 ATP + 2 H2O = cob(II)yrinate a,c diamide + 2 L-glutamate + 2 ADP + 2 phosphate + 2 H(+). Its pathway is cofactor biosynthesis; adenosylcobalamin biosynthesis; cob(II)yrinate a,c-diamide from sirohydrochlorin (anaerobic route): step 10/10. In terms of biological role, catalyzes the ATP-dependent amidation of the two carboxylate groups at positions a and c of cobyrinate, using either L-glutamine or ammonia as the nitrogen source. This chain is Cobyrinate a,c-diamide synthase, found in Haloarcula marismortui (strain ATCC 43049 / DSM 3752 / JCM 8966 / VKM B-1809) (Halobacterium marismortui).